The chain runs to 213 residues: MAQLALLLLSLFLTLISLAPPGASISSCNGPCRDLNDCDGQLICIKGKCNDDPQVGTHICRGTTPSPQPGGCKPSGTLTCRGKSYPTYDCSPPVTSSTPAKLTNNDFSEGGDDGGPSECDESYHNNNERIVALSTGWYNGGSRCGKMIRITASNGKSVSAKVVDECDSRHGCDKEHAGQPPCRNNIVDGSNAVWSALGLDKNVGVVDITWSMA.

The first 24 residues, 1–24 (MAQLALLLLSLFLTLISLAPPGAS), serve as a signal peptide directing secretion. 3 cysteine pairs are disulfide-bonded: C28–C60, C32–C44, and C38–C49. A 4-hydroxyproline mark is found at P65 and P67. Disulfide bonds link C72–C90, C80–C172, C119–C144, and C166–C172. Residues 91–121 (SPPVTSSTPAKLTNNDFSEGGDDGGPSECDE) form a disordered region. The span at 93-107 (PVTSSTPAKLTNNDF) shows a compositional bias: polar residues.

Belongs to the kiwellin family. Post-translationally, undergoes proteolytic cleavage by actinidin to produce kissper and KiTH. Three forms of KiTH are produced by cleavage at different sites, the main form produced in vivo is KiTH-1.

It is found in the secreted. PH-dependent, voltage-gated and anion-selective pore-forming peptide. This chain is Kiwellin, found in Actinidia deliciosa (Kiwi).